Here is a 230-residue protein sequence, read N- to C-terminus: Cutinase (230 aa).

An N-terminal signal peptide occupies residues 1–16 (MKFFALTTFLAATASA). A disulfide bridge connects residues cysteine 47 and cysteine 125. Serine 136 (nucleophile) is an active-site residue. Cysteines 187 and 194 form a disulfide. Residue aspartate 191 is part of the active site. The active-site Proton donor/acceptor is histidine 204.

It belongs to the cutinase family. Post-translationally, the 2 disulfide bonds play a critical role in holding the catalytic residues in juxta-position; reduction of the disulfide bridges results in the complete inactivation of the enzyme.

The protein resides in the secreted. The catalysed reaction is cutin + H2O = cutin monomers.. In terms of biological role, catalyzes the hydrolysis of complex carboxylic polyesters found in the cell wall of plants. Degrades cutin, a macromolecule that forms the structure of the plant cuticle. Allows pathogenic fungi to penetrate through the cuticular barrier into the host plant during the initial stage of fungal infection. The protein is Cutinase (CUTA) of Fusarium solani subsp. cucurbitae (Neocosmosporum cucurbitae).